Reading from the N-terminus, the 153-residue chain is Superoxide dismutase [Cu-Zn] (153 aa).

Residues H45, H47, and H62 each contribute to the Cu cation site. C56 and C145 are oxidised to a cystine. Positions 62, 70, 79, and 82 each coordinate Zn(2+). H119 contacts Cu cation.

The protein belongs to the Cu-Zn superoxide dismutase family. As to quaternary structure, homodimer. Requires Cu cation as cofactor. Zn(2+) serves as cofactor.

The protein resides in the cytoplasm. It carries out the reaction 2 superoxide + 2 H(+) = H2O2 + O2. Destroys radicals which are normally produced within the cells and which are toxic to biological systems. In Drosophila willistoni (Fruit fly), this protein is Superoxide dismutase [Cu-Zn].